Here is a 195-residue protein sequence, read N- to C-terminus: Imidazoleglycerol-phosphate dehydratase (195 aa).

It belongs to the imidazoleglycerol-phosphate dehydratase family.

Its subcellular location is the cytoplasm. The enzyme catalyses D-erythro-1-(imidazol-4-yl)glycerol 3-phosphate = 3-(imidazol-4-yl)-2-oxopropyl phosphate + H2O. It functions in the pathway amino-acid biosynthesis; L-histidine biosynthesis; L-histidine from 5-phospho-alpha-D-ribose 1-diphosphate: step 6/9. The polypeptide is Imidazoleglycerol-phosphate dehydratase (Burkholderia cenocepacia (strain ATCC BAA-245 / DSM 16553 / LMG 16656 / NCTC 13227 / J2315 / CF5610) (Burkholderia cepacia (strain J2315))).